A 185-amino-acid chain; its full sequence is Ribosome maturation factor RimP (185 aa).

This sequence belongs to the RimP family.

The protein localises to the cytoplasm. Its function is as follows. Required for maturation of 30S ribosomal subunits. The polypeptide is Ribosome maturation factor RimP (Magnetococcus marinus (strain ATCC BAA-1437 / JCM 17883 / MC-1)).